Consider the following 326-residue polypeptide: MYGIEYTTVLTFLISVILLNYVLKSLTRIMDFIIYRFLLIIVILSPFLNAQNYGINLPITGSMDTPYTNPTREEVFLTSTLCLYYPTEAATEINDNSWEDTLSQLFLTKGWPTGSIYFKAYTNIASFSVDPQLYCDYNLVLMKYDATLQLDMSELADLLLNEWLCNPMDITLYYYQQTDEANKWISMGSSCTIKVCPLNTQTLGIGCLTTDTNTFEEVATADKLVITDVVDGVNHKLNVTTNTCTIRNCKKLGPRENVAVIQVGGSDILDITADPTTAPQTERMMRVNWKKWWQVFYTIVDYVNQIVQAMSKRSRSLNSAAFYYRV.

An N-terminal signal peptide occupies residues 1–50 (MYGIEYTTVLTFLISVILLNYVLKSLTRIMDFIIYRFLLIIVILSPFLNA). Cystine bridges form between Cys82–Cys135, Cys165–Cys249, Cys191–Cys244, and Cys196–Cys207. Asp95 serves as a coordination point for Ca(2+). The segment at 165–167 (CNP) is CNP motif; interaction with ITGAV/ITGB3. Residues Gln177, Gly206, Thr214, Glu216, Asp228, Val229, and Asp231 each coordinate Ca(2+). Asn238 carries an N-linked (GlcNAc...) asparagine; by host glycan. Positions 253-255 (GPR) are GPR motif; interaction with ITGAX/ITGB2. A Ca(2+)-binding site is contributed by Asp301.

It belongs to the rotavirus VP7 family. In terms of assembly, homotrimer; disulfide-linked. 2 Ca(2+) ions bound at each subunit interface in the trimer hold the trimer together. Interacts with the intermediate capsid protein VP6. Interacts with the outer capsid protein VP5*. In terms of processing, N-glycosylated. The N-terminus is blocked possibly by pyroglutamic acid.

Its subcellular location is the virion. It localises to the host endoplasmic reticulum lumen. In terms of biological role, calcium-binding protein that interacts with rotavirus cell receptors once the initial attachment by VP4 has been achieved. Rotavirus attachment and entry into the host cell probably involves multiple sequential contacts between the outer capsid proteins VP4 and VP7, and the cell receptors. Following entry into the host cell, low intracellular or intravesicular Ca(2+) concentration probably causes the calcium-stabilized VP7 trimers to dissociate from the virion. This step is probably necessary for the membrane-disrupting entry step and the release of VP4, which is locked onto the virion by VP7. This Rotavirus A (strain RVA/Human/Japan/YO/1977/G3P1A[8]) (RV-A) protein is Outer capsid glycoprotein VP7.